The primary structure comprises 507 residues: Glutamyl-tRNA(Gln) amidotransferase subunit A, mitochondrial (507 aa).

A disordered region spans residues 29–51; the sequence is THPPEPIPPPPPPAPSSSPSPKQ. The segment covering 31–46 has biased composition (pro residues); that stretch reads PPEPIPPPPPPAPSSS. Active-site charge relay system residues include Lys-57 and Ser-135. Ser-159 serves as the catalytic Acyl-ester intermediate.

Belongs to the amidase family. GatA subfamily. Subunit of the heterotrimeric GatCAB amidotransferase (AdT) complex, composed of A, B and C subunits.

The protein resides in the mitochondrion. It catalyses the reaction L-glutamyl-tRNA(Gln) + L-glutamine + ATP + H2O = L-glutaminyl-tRNA(Gln) + L-glutamate + ADP + phosphate + H(+). Functionally, allows the formation of correctly charged Gln-tRNA(Gln) through the transamidation of misacylated Glu-tRNA(Gln) in the mitochondria. The reaction takes place in the presence of glutamine and ATP through an activated gamma-phospho-Glu-tRNA(Gln). In Podospora anserina (strain S / ATCC MYA-4624 / DSM 980 / FGSC 10383) (Pleurage anserina), this protein is Glutamyl-tRNA(Gln) amidotransferase subunit A, mitochondrial.